The following is a 156-amino-acid chain: Endoribonuclease YbeY (156 aa).

Positions 122, 126, and 132 each coordinate Zn(2+).

The protein belongs to the endoribonuclease YbeY family. Requires Zn(2+) as cofactor.

Its subcellular location is the cytoplasm. Functionally, single strand-specific metallo-endoribonuclease involved in late-stage 70S ribosome quality control and in maturation of the 3' terminus of the 16S rRNA. The protein is Endoribonuclease YbeY of Bacillus mycoides (strain KBAB4) (Bacillus weihenstephanensis).